Consider the following 169-residue polypeptide: N-alpha-acetyltransferase 50 (169 aa).

Residues 6-155 form the N-acetyltransferase domain; it reads IELGDVTPHN…DAHVLQKNLK (150 aa). At Thr-12 the chain carries Phosphothreonine. Tyr-31 is a binding site for substrate. N6-acetyllysine occurs at positions 34 and 37. The active site involves Tyr-73. Met-75 lines the substrate pocket. Residue 77–90 participates in acetyl-CoA binding; the sequence is LGCLAPYRRLGIGT. Phosphotyrosine is present on Tyr-110. Residue His-112 is part of the active site. A CoA-binding site is contributed by 117–126; that stretch reads NESAIDFYRK. The segment at 138-141 is substrate; it reads YYKR. An N6-acetyllysine modification is found at Lys-140.

The protein belongs to the acetyltransferase family. GNAT subfamily. Component of the N-terminal acetyltransferase E (NatE) complex at least composed of NAA10, NAA15 and NAA50. Interacts with NAA10. Interacts with NAA15. Predominantly interacts with NAA15 in the N-terminal acetyltransferase A complex (NatA complex); the interactions reduce the acetylation activity of the NatA complex. Component of the N-terminal acetyltransferase E (NatE)/HYPK complex at least composed of NAA10, NAA15, NAA50 and HYPK. Within the complex interacts with NAA15. Its capacity to interact with the NatA complex is reduced by HYPK. Interacts with NAA35.

The protein localises to the cytoplasm. The protein resides in the nucleus. It carries out the reaction N-terminal L-methionyl-L-alanyl-[protein] + acetyl-CoA = N-terminal N(alpha)-acetyl-L-methionyl-L-alanyl-[protein] + CoA + H(+). It catalyses the reaction N-terminal L-methionyl-L-seryl-[protein] + acetyl-CoA = N-terminal N(alpha)-acetyl-L-methionyl-L-seryl-[protein] + CoA + H(+). The enzyme catalyses N-terminal L-methionyl-L-valyl-[protein] + acetyl-CoA = N-terminal N(alpha)-acetyl-L-methionyl-L-valyl-[protein] + CoA + H(+). The catalysed reaction is N-terminal L-methionyl-L-threonyl-[protein] + acetyl-CoA = N-terminal N(alpha)-acetyl-L-methionyl-L-threonyl-[protein] + CoA + H(+). It carries out the reaction N-terminal L-methionyl-L-lysyl-[protein] + acetyl-CoA = N-terminal N(alpha)-acetyl-L-methionyl-L-lysyl-[protein] + CoA + H(+). It catalyses the reaction N-terminal L-methionyl-L-leucyl-[protein] + acetyl-CoA = N-terminal N(alpha)-acetyl-L-methionyl-L-leucyl-[protein] + CoA + H(+). The enzyme catalyses N-terminal L-methionyl-L-phenylalanyl-[protein] + acetyl-CoA = N-terminal N(alpha)-acetyl-L-methionyl-L-phenylalanyl-[protein] + CoA + H(+). The catalysed reaction is N-terminal L-methionyl-L-tyrosyl-[protein] + acetyl-CoA = N-terminal N(alpha)-acetyl-L-methionyl-L-tyrosyl-[protein] + CoA + H(+). In terms of biological role, N-alpha-acetyltransferase that acetylates the N-terminus of proteins that retain their initiating methionine. Has a broad substrate specificity: able to acetylate the initiator methionine of most peptides, except for those with a proline in second position. Also displays N-epsilon-acetyltransferase activity by mediating acetylation of the side chain of specific lysines on proteins. Autoacetylates in vivo. The relevance of N-epsilon-acetyltransferase activity is however unclear: able to acetylate H4 in vitro, but this result has not been confirmed in vivo. Component of N-alpha-acetyltransferase complexes containing NAA10 and NAA15, which has N-alpha-acetyltransferase activity. Does not influence the acetyltransferase activity of NAA10. However, it negatively regulates the N-alpha-acetyltransferase activity of the N-terminal acetyltransferase A complex (also called the NatA complex). The multiprotein complexes probably constitute the major contributor for N-terminal acetylation at the ribosome exit tunnel, with NAA10 acetylating all amino termini that are devoid of methionine and NAA50 acetylating other peptides. Required for sister chromatid cohesion during mitosis by promoting binding of CDCA5/sororin to cohesin: may act by counteracting the function of NAA10. The chain is N-alpha-acetyltransferase 50 (NAA50) from Bos taurus (Bovine).